The primary structure comprises 733 residues: Methylmalonyl-CoA mutase large subunit (733 aa).

A compositionally biased stretch (acidic residues) spans M1 to E10. The segment at M1–E22 is disordered. Residues Y78, M81, T88, R90, Y92, and S117 each contribute to the (R)-methylmalonyl-CoA site. Residues F120 and A142 each coordinate cob(II)alamin. (R)-methylmalonyl-CoA is bound by residues T198 and Q200. 2 residues coordinate cob(II)alamin: V209 and R210. (R)-methylmalonyl-CoA contacts are provided by R210, H247, R286, and S288. Residues G336, E373, A376, G612, H613, D614, R615, S658, L660, G689, and T712 each coordinate cob(II)alamin. Positions R600–E732 constitute a B12-binding domain.

This sequence belongs to the methylmalonyl-CoA mutase family. Heterodimer of an alpha and a beta chain. Requires adenosylcob(III)alamin as cofactor.

The enzyme catalyses (R)-methylmalonyl-CoA = succinyl-CoA. Catalyzes the isomerization of succinyl-CoA to methylmalonyl-CoA during synthesis of propionate from tricarboxylic acid-cycle intermediates. This conversion most likely represents an important source of building blocks for polyketide antibiotic biosynthesis. It is unable to catalyze the conversion of isobutyryl-CoA into N-butyryl-CoA. This Streptomyces virginiae (Streptomyces cinnamonensis) protein is Methylmalonyl-CoA mutase large subunit (mutB).